A 1153-amino-acid polypeptide reads, in one-letter code: Error-prone DNA polymerase (1153 aa).

The segment at 1107-1153 (DELIAPSASTEREAPLNDDRRDHPDLPAQQIRHPRNVRILPPSRDFH) is disordered. Basic and acidic residues predominate over residues 1116-1131 (TEREAPLNDDRRDHPD).

The protein belongs to the DNA polymerase type-C family. DnaE2 subfamily.

It is found in the cytoplasm. The catalysed reaction is DNA(n) + a 2'-deoxyribonucleoside 5'-triphosphate = DNA(n+1) + diphosphate. DNA polymerase involved in damage-induced mutagenesis and translesion synthesis (TLS). It is not the major replicative DNA polymerase. This Rhodopseudomonas palustris (strain BisA53) protein is Error-prone DNA polymerase.